The sequence spans 139 residues: Large ribosomal subunit protein uL16 (139 aa).

Belongs to the universal ribosomal protein uL16 family. In terms of assembly, part of the 50S ribosomal subunit.

Functionally, binds 23S rRNA and is also seen to make contacts with the A and possibly P site tRNAs. This is Large ribosomal subunit protein uL16 from Mycoplasma pneumoniae (strain ATCC 29342 / M129 / Subtype 1) (Mycoplasmoides pneumoniae).